Reading from the N-terminus, the 127-residue chain is Small ribosomal subunit protein uS11 (127 aa).

Belongs to the universal ribosomal protein uS11 family. Part of the 30S ribosomal subunit. Interacts with proteins S7 and S18. Binds to IF-3.

Functionally, located on the platform of the 30S subunit, it bridges several disparate RNA helices of the 16S rRNA. Forms part of the Shine-Dalgarno cleft in the 70S ribosome. This chain is Small ribosomal subunit protein uS11, found in Nitrosococcus oceani (strain ATCC 19707 / BCRC 17464 / JCM 30415 / NCIMB 11848 / C-107).